A 257-amino-acid polypeptide reads, in one-letter code: Chymotrypsin-like protease VLCTLP (257 aa).

The signal sequence occupies residues 1 to 18; that stretch reads MVLIRVLANLLLLQLSYA. A propeptide spanning residues 19 to 24 is cleaved from the precursor; sequence QKSSEL. The Peptidase S1 domain occupies 25–248; that stretch reads VVGGDECNIN…YSDWIQSIIA (224 aa). Cystine bridges form between Cys31/Cys162, Cys49/Cys65, Cys97/Cys255, Cys141/Cys209, Cys173/Cys188, and Cys199/Cys224. N-linked (GlcNAc...) asparagine glycosylation occurs at Asn44. The active-site Charge relay system is His64. A glycan (N-linked (GlcNAc...) asparagine) is linked at Asn100. The Charge relay system role is filled by Asp109. Asn116 and Asn153 each carry an N-linked (GlcNAc...) asparagine glycan. The active-site Charge relay system is Ser203. Asn250 carries N-linked (GlcNAc...) asparagine glycosylation.

This sequence belongs to the peptidase S1 family. Snake venom subfamily. In terms of assembly, monomer. Post-translationally, partial deglycosylation has not effect on enzyme activity. Expressed by the venom gland.

It is found in the secreted. With respect to regulation, inhibited by PMSF. Functionally, snake venom serine protease with tyrosine-specific chymotrypsin-like activity. Hydrolyzes the N-acetyl-L-tyrosine ethyl ester (ATEE). Has weak fibrinogenolytic activity. Weakly hydrolyzes azocasein, Aalpha-chain (FGA) and more slowly Bbeta-chain (FGB) of fibrinogen. Optimal substrates are angiotensins I and II (AGT). This Macrovipera lebetinus (Levantine viper) protein is Chymotrypsin-like protease VLCTLP.